The chain runs to 157 residues: tRNA (cytidine(34)-2'-O)-methyltransferase (157 aa).

S-adenosyl-L-methionine is bound by residues L78, G100, I122, and S130.

This sequence belongs to the class IV-like SAM-binding methyltransferase superfamily. RNA methyltransferase TrmH family. TrmL subfamily. As to quaternary structure, homodimer.

Its subcellular location is the cytoplasm. It catalyses the reaction cytidine(34) in tRNA + S-adenosyl-L-methionine = 2'-O-methylcytidine(34) in tRNA + S-adenosyl-L-homocysteine + H(+). The enzyme catalyses 5-carboxymethylaminomethyluridine(34) in tRNA(Leu) + S-adenosyl-L-methionine = 5-carboxymethylaminomethyl-2'-O-methyluridine(34) in tRNA(Leu) + S-adenosyl-L-homocysteine + H(+). Methylates the ribose at the nucleotide 34 wobble position in the two leucyl isoacceptors tRNA(Leu)(CmAA) and tRNA(Leu)(cmnm5UmAA). Catalyzes the methyl transfer from S-adenosyl-L-methionine to the 2'-OH of the wobble nucleotide. The polypeptide is tRNA (cytidine(34)-2'-O)-methyltransferase (Escherichia coli O6:H1 (strain CFT073 / ATCC 700928 / UPEC)).